The primary structure comprises 280 residues: Late embryogenesis abundant protein M17 (280 aa).

A signal peptide spans 1–22 (MGNLKSLVLLALLFSFSVAVFA). Asn23 is a glycosylation site (N-linked (GlcNAc...) asparagine). A run of 2 repeats spans residues 76–97 (GGCR…CCRS) and 131–152 (GGCR…CCRS). The segment at 76-262 (GGCRWGCCGG…RGRCRYCCRS (187 aa)) is 4 X 22 AA repeats, Cys-rich. Residues 163-184 (VEPNDVEPQQGGRGGGGGGGGG) form a disordered region. The span at 173–184 (GGRGGGGGGGGG) shows a compositional bias: gly residues. The stretch at 186 to 207 (GGCRWGCCGGWWRGRCRYCCRS) is repeat 3. The disordered stretch occupies residues 218–239 (VEPNDVEPQQGGRGGGGGGGGG). Residues 228–239 (GGRGGGGGGGGG) show a composition bias toward gly residues. Repeat 4 spans residues 241 to 262 (GGCRWGCCGGWWRGRCRYCCRS).

Its function is as follows. May be involved in the acquisition of desiccation tolerance during late phase of embryogenesis. This is Late embryogenesis abundant protein M17 from Arabidopsis thaliana (Mouse-ear cress).